We begin with the raw amino-acid sequence, 615 residues long: Chaperone protein HscA homolog (615 aa).

Belongs to the heat shock protein 70 family.

Functionally, chaperone involved in the maturation of iron-sulfur cluster-containing proteins. Has a low intrinsic ATPase activity which is markedly stimulated by HscB. The sequence is that of Chaperone protein HscA homolog from Aeromonas salmonicida (strain A449).